Consider the following 391-residue polypeptide: NADH-quinone oxidoreductase subunit D (391 aa).

Belongs to the complex I 49 kDa subunit family. As to quaternary structure, NDH-1 is composed of 14 different subunits. Subunits NuoB, C, D, E, F, and G constitute the peripheral sector of the complex.

Its subcellular location is the cell inner membrane. It catalyses the reaction a quinone + NADH + 5 H(+)(in) = a quinol + NAD(+) + 4 H(+)(out). NDH-1 shuttles electrons from NADH, via FMN and iron-sulfur (Fe-S) centers, to quinones in the respiratory chain. The immediate electron acceptor for the enzyme in this species is believed to be ubiquinone. Couples the redox reaction to proton translocation (for every two electrons transferred, four hydrogen ions are translocated across the cytoplasmic membrane), and thus conserves the redox energy in a proton gradient. The polypeptide is NADH-quinone oxidoreductase subunit D (Rickettsia rickettsii (strain Iowa)).